Consider the following 803-residue polypeptide: Putative metal ion transporter C27B12.12c (803 aa).

The segment covering 1–20 has biased composition (polar residues); it reads MSFQQPSNGAQGGNNNALEK. The interval 1-255 is disordered; it reads MSFQQPSNGA…SSDVSGSDEN (255 aa). A compositionally biased stretch (low complexity) spans 21-45; that stretch reads TSSNEATSSSSTQVSSLSASGISVS. Over residues 58 to 82 the composition is skewed to polar residues; the sequence is MQVQSSQHLEANVQSPVSSQTTYAT. Basic residues-rich tracts occupy residues 105–123 and 152–166; these read KPKK…RKKI and QSNK…KHSP. 2 stretches are compositionally biased toward low complexity: residues 181–194 and 218–253; these read ALSA…QHAS and SSSS…SGSD. Phosphoserine is present on Ser318. Disordered regions lie at residues 326-349 and 406-431; these read PRLK…QVDE and FEPH…NNAE. The span at 337-347 shows a compositional bias: acidic residues; it reads DNEDREVDSQV. The segment covering 406–419 has biased composition (basic and acidic residues); the sequence is FEPHWNDLSPHDPN. Polar residues predominate over residues 420–430; that stretch reads DPSSSLHSNNA. Ser449 and Ser452 each carry phosphoserine. The next 2 membrane-spanning stretches (helical) occupy residues 745 to 765 and 776 to 796; these read ITLI…FGMN and LAWF…GWII.

This sequence belongs to the CorA metal ion transporter (MIT) (TC 1.A.35) family.

The protein localises to the cytoplasm. The protein resides in the membrane. This chain is Putative metal ion transporter C27B12.12c, found in Schizosaccharomyces pombe (strain 972 / ATCC 24843) (Fission yeast).